A 443-amino-acid chain; its full sequence is ATP-dependent protease ATPase subunit HslU (443 aa).

Residues Ile18, 60–65 (GVGKTE), Asp256, Glu321, and Arg393 contribute to the ATP site.

Belongs to the ClpX chaperone family. HslU subfamily. In terms of assembly, a double ring-shaped homohexamer of HslV is capped on each side by a ring-shaped HslU homohexamer. The assembly of the HslU/HslV complex is dependent on binding of ATP.

Its subcellular location is the cytoplasm. Functionally, ATPase subunit of a proteasome-like degradation complex; this subunit has chaperone activity. The binding of ATP and its subsequent hydrolysis by HslU are essential for unfolding of protein substrates subsequently hydrolyzed by HslV. HslU recognizes the N-terminal part of its protein substrates and unfolds these before they are guided to HslV for hydrolysis. The chain is ATP-dependent protease ATPase subunit HslU from Salmonella agona (strain SL483).